A 198-amino-acid polypeptide reads, in one-letter code: 3-isopropylmalate dehydratase small subunit (198 aa).

Belongs to the LeuD family. LeuD type 1 subfamily. Heterodimer of LeuC and LeuD.

The enzyme catalyses (2R,3S)-3-isopropylmalate = (2S)-2-isopropylmalate. Its pathway is amino-acid biosynthesis; L-leucine biosynthesis; L-leucine from 3-methyl-2-oxobutanoate: step 2/4. Functionally, catalyzes the isomerization between 2-isopropylmalate and 3-isopropylmalate, via the formation of 2-isopropylmaleate. This is 3-isopropylmalate dehydratase small subunit from Mycobacterium marinum (strain ATCC BAA-535 / M).